The following is a 900-amino-acid chain: MNYPGRGSPRSPEHNGRGGGGGAWELGSDARPAFGGGVCCFEHLPGGDPDDGDVPLALLRGEPGLHLAPGTDDHNHHLALDPCLSDENYDFSSAESGSSLRYYSEGESGGGGSSLSLHPPQQPPLVPTNSGGGGATGGSPGERKRTRLGGPAARHRYEVVTELGPEEVRWFYKEDKKTWKPFIGYDSLRIELAFRTLLQTTGARPQGGDRDGDHVCSPTGPASSSGEDDDEDRACGFCQSTTGHEPEMVELVNIEPVCVRGGLYEVDVTQGECYPVYWNQADKIPVMRGQWFIDGTWQPLEEEESNLIEQEHLNCFRGQQMQENFDIEVSKSIDGKDAVHSFKLSRNHVDWHSVDEVYLYSDATTSKIARTVTQKLGFSKASSSGTRLHRGYVEEATLEDKPSQTTHIVFVVHGIGQKMDQGRIIKNTAMMREAARKIEERHFSNHATHVEFLPVEWRSKLTLDGDTVDSITPDKVRGLRDMLNSSAMDIMYYTSPLYRDELVKGLQQELNRLYSLFCSRNPDFEEKGGKVSIVSHSLGCVITYDIMTGWNPVRLYEQLLQKEEELPDERWMSYEERHLLDELYITKRRLKEIEERLHGLKASSMTQTPALKFKVENFFCMGSPLAVFLALRGIRPGNTGSQDHILPREICNRLLNIFHPTDPVAYRLEPLILKHYSNISPVQIHWYNTSNPLPYEHMKPSFLNPAKEPTSVSENEGISTIPSPVTSPVLSRRHYGESITNIGKASILGAASIGKGLGGMLFSRFGRSSTTQSSETSKDSMEDEKKPVASPSATTVGTQTLPHSSSGFLDSAYFRLQESFFNLPQLLFPENVMQNKDNALVELDHRIDFELREGLVESRYWSAVTSHTAYWSSLDVALFLLTFMYKHEHDDDAKPNLDPI.

Disordered regions lie at residues 1–28 (MNYP…ELGS), 100–152 (LRYY…GGPA), and 202–233 (GARP…DEDR). Phosphoserine is present on residues Ser8 and Ser11. A compositionally biased stretch (gly residues) spans 130-140 (SGGGGATGGSP). The active site involves Ser537. The region spanning 611–886 (LKFKVENFFC…ALFLLTFMYK (276 aa)) is the DDHD domain. 2 disordered regions span residues 706–725 (AKEP…PSPV) and 768–801 (SSTT…TQTL). Over residues 710-725 (TSVSENEGISTIPSPV) the composition is skewed to polar residues. Ser723 is subject to Phosphoserine. Residues 776–787 (TSKDSMEDEKKP) show a composition bias toward basic and acidic residues. The segment covering 791–801 (PSATTVGTQTL) has biased composition (polar residues).

This sequence belongs to the PA-PLA1 family. In terms of assembly, forms homooligomers and, to a much smaller extent, heterooligomers with DDHD2. As to expression, highly expressed in testis. Also expressed in brain, spleen and lung. Only expressed in cerebellum in fetal brain.

It is found in the cytoplasm. The enzyme catalyses a 1,2-diacyl-sn-glycero-3-phosphate + H2O = a 2-acyl-sn-glycerol 3-phosphate + a fatty acid + H(+). It carries out the reaction a 1,2-diacyl-sn-glycero-3-phospho-(1D-myo-inositol) + H2O = a 2-acyl-sn-glycero-3-phospho-D-myo-inositol + a fatty acid + H(+). It catalyses the reaction 1-octadecanoyl-2-(5Z,8Z,11Z,14Z-eicosatetraenoyl)-sn-glycero-3-phospho-(1D-myo-inositol) + H2O = 2-(5Z,8Z,11Z,14Z-eicosatetraenoyl)-sn-glycero-3-phospho-(1D-myo-inositol) + octadecanoate + H(+). The catalysed reaction is a 1-acyl-2-(5Z,8Z,11Z,14Z-eicosatetraenoyl)-sn-glycero-3-phospho-(1D-myo-inositol) + H2O = 2-(5Z,8Z,11Z,14Z-eicosatetraenoyl)-sn-glycero-3-phospho-(1D-myo-inositol) + a fatty acid + H(+). The enzyme catalyses 1,2-dihexadecanoyl-sn-glycero-3-phospho-(1D-myo-inositol) + H2O = 2-hexadecanoyl-sn-glycero-3-phospho-(1D-myo-inositol) + hexadecanoate + H(+). It carries out the reaction a 1-acyl-2-(5Z,8Z,11Z,14Z)-eicosatetraenoyl-sn-glycero-3-phosphate + H2O = 2-(5Z,8Z,11Z,14Z-eicosatetraenoyl)-sn-glycero-3-phosphate + a fatty acid + H(+). It catalyses the reaction 1,2-di-(9Z-octadecenoyl)-sn-glycero-3-phosphate + H2O = 2-(9Z-octadecenoyl)-sn-glycero-3-phosphate + (9Z)-octadecenoate + H(+). The catalysed reaction is 1-hexadecanoyl-2-(9Z-octadecenoyl)-sn-glycero-3-phosphate + H2O = 2-(9Z-octadecenoyl)-sn-glycero-3-phosphate + hexadecanoate + H(+). The enzyme catalyses 1-hexadecanoyl-2-(9Z-octadecenoyl)-sn-glycero-3-phospho-L-serine + H2O = 2-(9Z-octadecenoyl)-sn-glycero-3-phospho-L-serine + hexadecanoate + H(+). It carries out the reaction 1,2-di-(5Z,8Z,11Z,14Z)-eicosatetraenoyl-sn-glycero-3-phosphate + H2O = 2-(5Z,8Z,11Z,14Z-eicosatetraenoyl)-sn-glycero-3-phosphate + (5Z,8Z,11Z,14Z)-eicosatetraenoate + H(+). It catalyses the reaction 1-octadecanoyl-2-(5Z,8Z,11Z,14Z-eicosatetraenoyl)-sn-glycero-3-phosphate + H2O = 2-(5Z,8Z,11Z,14Z-eicosatetraenoyl)-sn-glycero-3-phosphate + octadecanoate + H(+). The catalysed reaction is a 1,2-diacyl-sn-glycero-3-phosphocholine + H2O = a 2-acyl-sn-glycero-3-phosphocholine + a fatty acid + H(+). The enzyme catalyses a 1,2-diacyl-sn-glycero-3-phosphoethanolamine + H2O = a 2-acyl-sn-glycero-3-phosphoethanolamine + a fatty acid + H(+). It carries out the reaction a 1,2-diacyl-sn-glycero-3-phospho-L-serine + H2O = a 2-acyl-sn-glycero-3-phospho-L-serine + a fatty acid + H(+). It catalyses the reaction a 1,2-diacyl-sn-glycero-3-phospho-(1'-sn-glycerol) + H2O = 2-acyl-sn-glycero-3-phospho-(1'-sn-glycerol) + a fatty acid + H(+). The catalysed reaction is 1-hexadecanoyl-2-(9Z-octadecenoyl)-sn-glycero-3-phospho-(1'-sn-glycerol) + H2O = 2-(9Z-octadecenoyl)-sn-glycero-3-phospho-(1'-sn-glycerol) + hexadecanoate + H(+). The enzyme catalyses 1-acyl-2-(5Z,8Z,11Z,14Z-eicosatetraenoyl)-sn-glycero-3-phosphocholine + H2O = 2-(5Z,8Z,11Z,14Z)-eicosatetraenoyl-sn-glycero-3-phosphocholine + a fatty acid + H(+). It carries out the reaction 1-acyl-2-(5Z,8Z,11Z,14Z)-eicosatetraenoyl-sn-glycero-3-phosphoethanolamine + H2O = 2-(5Z,8Z,11Z,14Z)-eicosatetraenoyl-sn-glycero-3-phosphoethanolamine + a fatty acid + H(+). It catalyses the reaction 1-(9Z-octadecenoyl)-2-(7Z,10Z,13Z,16Z,19Z-docosapentaenoyl)-sn-glycero-3-phospho-1D-myo-inositol + H2O = 2-(7Z,10Z,13Z,16Z,19Z-docosapentaenoyl)-sn-glycero-3-phospho-1D-myo-inositol + (9Z)-octadecenoate + H(+). The catalysed reaction is 1-(9Z-octadecenoyl)-2-(5Z,8Z,11Z,14Z-eicosatetraenoyl)-sn-glycero-3-phospho-1D-myo-inositol + H2O = 2-(5Z,8Z,11Z,14Z-eicosatetraenoyl)-sn-glycero-3-phospho-(1D-myo-inositol) + (9Z)-octadecenoate + H(+). The enzyme catalyses 1,2-di-(9Z-octadecenoyl)-sn-glycero-3-phospho-1D-myo-inositol + H2O = 2-(9Z-octadecenoyl)-sn-glycero-3-phospho-1D-myo-inositol + (9Z)-octadecenoate + H(+). It carries out the reaction 1-(9Z-octadecenoyl)-2-(8Z,11Z,14Z-eicosatrienoyl)-sn-glycero-3-phospho-1D-myo-inositol + H2O = 2-(8Z,11Z,14Z-eicosatrienoyl)-sn-glycero-3-phospho-1D-myo-inositol + (9Z)-octadecenoate + H(+). It catalyses the reaction 1,2-di-(9Z-octadecenoyl)-sn-glycero-3-phosphocholine + H2O = (9Z-octadecenoyl)-sn-glycero-3-phosphocholine + (9Z)-octadecenoate + H(+). Its pathway is phospholipid metabolism; phosphatidylinositol metabolism. Phosphatidate (1,2-diacyl-sn-glycero-3-phosphate, PA) can positively regulate phospholipase A1 activity. Its function is as follows. Phospholipase A1 (PLA1) that hydrolyzes ester bonds at the sn-1 position of glycerophospholipids producing a free fatty acid and a lysophospholipid. Prefers phosphatidate (1,2-diacyl-sn-glycero-3-phosphate, PA) as substrate in vitro, but can efficiently hydrolyze phosphatidylinositol (1,2-diacyl-sn-glycero-3-phospho-(1D-myo-inositol), PI), as well as a range of other glycerophospholipid substrates such as phosphatidylcholine (1,2-diacyl-sn-glycero-3-phosphocholine, PC), phosphatidylethanolamine (1,2-diacyl-sn-glycero-3-phosphoethanolamine, PE), phosphatidylserine (1,2-diacyl-sn-glycero-3-phospho-L-serine, PS) and phosphatidylglycerol (1,2-diacyl-sn-glycero-3-phospho-(1'-sn-glycerol), PG). Involved in the regulation of the endogenous content of polyunsaturated PI and PS lipids in the nervous system. Changes in these lipids extend to downstream metabolic products like PI phosphates PIP and PIP2, which play fundamental roles in cell biology. Regulates mitochondrial morphology. These dynamic changes may be due to PA hydrolysis at the mitochondrial surface. May play a regulatory role in spermatogenesis or sperm function. This is Phospholipase DDHD1 from Homo sapiens (Human).